Here is a 414-residue protein sequence, read N- to C-terminus: Secreted beta-glucosidase sun1 (414 aa).

Positions 1-19 (MKFNTVALTLATAGSLVTA) are cleaved as a signal peptide. Asparagine 80 is a glycosylation site (N-linked (GlcNAc...) asparagine). The span at 115 to 140 (TSASSSETVQTPAASSSSASSSSTAT) shows a compositional bias: low complexity. The tract at residues 115–141 (TSASSSETVQTPAASSSSASSSSTATG) is disordered. The N-linked (GlcNAc...) asparagine glycan is linked to asparagine 377.

The protein belongs to the SUN family. Post-translationally, highly glycosylated.

It is found in the secreted. The protein localises to the cell wall. Cell surface beta-glucosidase involved in cell wall biosynthesis and septation, and thus required for normal growth and correct hyphal morphogenesis. Has hydrolytic activity on linear (1-&gt;3)-beta-D-glucans such as laminaribiose and other laminarioligosaccharides. Also has a minor transferase activity. The polypeptide is Secreted beta-glucosidase sun1 (sun1) (Aspergillus fumigatus (strain ATCC MYA-4609 / CBS 101355 / FGSC A1100 / Af293) (Neosartorya fumigata)).